Reading from the N-terminus, the 354-residue chain is Annexin A13 (354 aa).

Annexin repeat units follow at residues 26-97 (NDPN…MLLT), 98-177 (DTDK…ALLQ), 203-275 (NLVE…LTLN), and 279-350 (NRPK…ALIG). Residues M39, G41, G43, T44, E46, E83, M111, G113, G115, E118, D163, D265, M292, G294, L295, G296, and E336 each contribute to the Ca(2+) site.

Belongs to the annexin family. As to quaternary structure, homodimer.

The protein resides in the tegument. The protein localises to the secreted. It is found in the extracellular exosome. It localises to the host cell. Functionally, involved in reproduction of the worm. Involved in host-parasite interaction. Delivered into the host cell by means of parasite exosomes. Binds to acidic phospholipid membranes in a calcium-dependent manner in vitro. Causes aggregation of liposomes in the presence of calcium, but not in its absence. Likely to promote membrane fusion. May provide structural integrity within the tegument. In Schistosoma japonicum (Blood fluke), this protein is Annexin A13.